The chain runs to 84 residues: MKKGLHPESYRPVVFKDMSNGDMFLSKSTVATKETIEFEGETYPLLKIEISNTSHPFYTGKSTLVDTAGRVDKFMSRYGDRKKK.

It belongs to the bacterial ribosomal protein bL31 family. Type B subfamily. Part of the 50S ribosomal subunit.

In Bacteroides thetaiotaomicron (strain ATCC 29148 / DSM 2079 / JCM 5827 / CCUG 10774 / NCTC 10582 / VPI-5482 / E50), this protein is Large ribosomal subunit protein bL31B.